The primary structure comprises 273 residues: MTDSTIRIAIVGAGGRMGRQLIQAVTQMEGVVLGAAIERKGSTLVGSDAGELAGVGLLNVIVGDDLSQLTDNFDVLIDFTRPEGTLEHLAICRQHRKAMVIGTTGFDEAGKAAISEAAADIGIVFAANFSVGVNVVLKLLEKAAKVMGDYTDIEIIEAHHRHKVDAPSGTALAMGEAIADAMGRSLKDCAVYSREGYTGERKPGTIGFATVRAGDIVGEHTAMFADIGERVEITHKATSRMTFAHGAVKSTIWLGKHDNGLFDMRDVLNLNEL.

NAD(+) contacts are provided by residues 12–17 (GAGGRM) and Glu-38. Arg-39 contacts NADP(+). NAD(+) is bound by residues 102–104 (GTT) and 126–129 (AANF). His-159 functions as the Proton donor/acceptor in the catalytic mechanism. Residue His-160 participates in (S)-2,3,4,5-tetrahydrodipicolinate binding. Residue Lys-163 is the Proton donor of the active site. 169 to 170 (GT) lines the (S)-2,3,4,5-tetrahydrodipicolinate pocket.

The protein belongs to the DapB family. Homotetramer.

It localises to the cytoplasm. It carries out the reaction (S)-2,3,4,5-tetrahydrodipicolinate + NAD(+) + H2O = (2S,4S)-4-hydroxy-2,3,4,5-tetrahydrodipicolinate + NADH + H(+). The enzyme catalyses (S)-2,3,4,5-tetrahydrodipicolinate + NADP(+) + H2O = (2S,4S)-4-hydroxy-2,3,4,5-tetrahydrodipicolinate + NADPH + H(+). It functions in the pathway amino-acid biosynthesis; L-lysine biosynthesis via DAP pathway; (S)-tetrahydrodipicolinate from L-aspartate: step 4/4. In terms of biological role, catalyzes the conversion of 4-hydroxy-tetrahydrodipicolinate (HTPA) to tetrahydrodipicolinate. This Yersinia pseudotuberculosis serotype O:1b (strain IP 31758) protein is 4-hydroxy-tetrahydrodipicolinate reductase.